The following is a 465-amino-acid chain: ATP synthase subunit beta (465 aa).

154–161 is an ATP binding site; it reads GGAGVGKT.

Belongs to the ATPase alpha/beta chains family. In terms of assembly, F-type ATPases have 2 components, CF(1) - the catalytic core - and CF(0) - the membrane proton channel. CF(1) has five subunits: alpha(3), beta(3), gamma(1), delta(1), epsilon(1). CF(0) has three main subunits: a(1), b(2) and c(9-12). The alpha and beta chains form an alternating ring which encloses part of the gamma chain. CF(1) is attached to CF(0) by a central stalk formed by the gamma and epsilon chains, while a peripheral stalk is formed by the delta and b chains.

It localises to the cell inner membrane. The catalysed reaction is ATP + H2O + 4 H(+)(in) = ADP + phosphate + 5 H(+)(out). In terms of biological role, produces ATP from ADP in the presence of a proton gradient across the membrane. The catalytic sites are hosted primarily by the beta subunits. The chain is ATP synthase subunit beta from Methylobacillus flagellatus (strain ATCC 51484 / DSM 6875 / VKM B-1610 / KT).